The sequence spans 210 residues: dTTP/UTP pyrophosphatase (210 aa).

Residue aspartate 89 is the Proton acceptor of the active site.

Belongs to the Maf family. YhdE subfamily. It depends on a divalent metal cation as a cofactor.

The protein localises to the cytoplasm. It catalyses the reaction dTTP + H2O = dTMP + diphosphate + H(+). The catalysed reaction is UTP + H2O = UMP + diphosphate + H(+). Nucleoside triphosphate pyrophosphatase that hydrolyzes dTTP and UTP. May have a dual role in cell division arrest and in preventing the incorporation of modified nucleotides into cellular nucleic acids. The polypeptide is dTTP/UTP pyrophosphatase (Burkholderia orbicola (strain AU 1054)).